Consider the following 257-residue polypeptide: Zinc transporter ZupT (257 aa).

Transmembrane regions (helical) follow at residues 5–25, 32–52, 61–81, 109–129, 137–157, 171–191, 195–215, and 236–256; these read LILT…GVIG, VLAF…LMEM, GMSP…YFAL, AILL…ATYV, LGFG…LAVA, ILWA…TWLI, MISP…MVAL, and GVLC…TAGF. Residues asparagine 120 and glutamate 123 each coordinate Fe(2+). Residues glutamate 123 and histidine 148 each contribute to the Zn(2+) site. Positions 149, 152, and 181 each coordinate Fe(2+). Position 152 (glutamate 152) interacts with Zn(2+).

This sequence belongs to the ZIP transporter (TC 2.A.5) family. ZupT subfamily.

The protein localises to the cell inner membrane. It catalyses the reaction Zn(2+)(in) = Zn(2+)(out). Its function is as follows. Mediates zinc uptake. May also transport other divalent cations. The polypeptide is Zinc transporter ZupT (Enterobacter sp. (strain 638)).